The following is a 369-amino-acid chain: Serine/threonine-protein phosphatase PP2A-1 catalytic subunit (369 aa).

The interval 1–57 (MDTDLDVPMQDAVTEQLTPTVSEDMDLNNNSSDNNAEEFSVDDLKPGSSGIADHKSS) is disordered. Mn(2+) contacts are provided by D117, H119, D145, and N177. The Proton donor role is filled by H178. Mn(2+) is bound by residues H227 and H301. The segment at 348 to 369 (QYDPSVRPGEPSVSRKTPDYFL) is disordered. The residue at position 369 (L369) is a Leucine methyl ester.

Belongs to the PPP phosphatase family. PP-2A subfamily. Inactivated in a complex with phosphatase methylesterase PPE1 (PP2Ai). Interacts with phosphatase 2A activator RRD2, which can reactivate PP2Ai by dissociating the catalytic subunit from the complex. Forms a ternary complex with RRD2-TAP42. Mn(2+) serves as cofactor. Post-translationally, reversibly methyl esterified on Leu-369 by leucine carboxyl methyltransferase 1 (PPM1) and protein phosphatase methylesterase 1 (PPE1). Carboxyl methylation influences the affinity of the catalytic subunit for the different regulatory subunits, thereby modulating the PP2A holoenzyme's substrate specificity, enzyme activity and cellular localization.

The enzyme catalyses O-phospho-L-seryl-[protein] + H2O = L-seryl-[protein] + phosphate. The catalysed reaction is O-phospho-L-threonyl-[protein] + H2O = L-threonyl-[protein] + phosphate. Functionally, exact function not known, phosphatase 2A performs an essential cellular function. This chain is Serine/threonine-protein phosphatase PP2A-1 catalytic subunit (PPH21), found in Saccharomyces cerevisiae (strain ATCC 204508 / S288c) (Baker's yeast).